Consider the following 551-residue polypeptide: MGNACGGSLRSKYLSFKQTASQRHDTDDNNNAAAADSPKKPSRPPAAAKTDDHPVSASAPAAAMRRGQAPADLGSVLGHPTPNLRDLYAMGRKLGQGQFGTTYLCTELSTGVDYACKSISKRKLITKEDIEDVRREIQIMHHLSGHKNVVAIKGAYEDQLYVHIVMELCAGGELFDRIIQRGHYSERKAAELTRIIVGVVEACHSLGVMHRDLKPENFLLANKDDDLSLKAIDFGLSVFFKPGQTFTDVVGSPYYVAPEVLLKHYGPEADVWTAGVILYILLSGVPPFWAETQQGIFDAVLKGFIDFDSDPWPVISESAKDLITKMLNPRPKERLTAHEVLCHPWIRDHGVAPDRPLDPAVLSRIKQFSAMNKLKKMALRVIAESLSEEEIAGLKEMFQTMDADNSGAITYDELKEGLRKYGSTLKDTEIRDLMDAADIDNSGTIDYIEFIAATLHLNKLEREEHLVAAFSYFDKDGSGYITVDELQQACKEHNMPDAFLDDVINEADQDNDGRIDYGEFVAMMTKGNMGVGRRTMRNSLNISMRDAPGAL.

Residue Gly-2 is the site of N-myristoyl glycine attachment. Residues 15 to 78 (SFKQTASQRH…APADLGSVLG (64 aa)) form a disordered region. Residues 88–346 (YAMGRKLGQG…AHEVLCHPWI (259 aa)) enclose the Protein kinase domain. Residues 94–102 (LGQGQFGTT) and Lys-117 each bind ATP. Asp-212 serves as the catalytic Proton acceptor. Residues 352-382 (APDRPLDPAVLSRIKQFSAMNKLKKMALRVI) are autoinhibitory domain. EF-hand domains are found at residues 389-424 (EEIA…YGST), 425-460 (LKDT…LNKL), 461-496 (EREE…HNMP), and 497-530 (DAFL…GNMG). Asp-402, Asp-404, Ser-406, Glu-413, Asp-438, Asp-440, Ser-442, Thr-444, Glu-449, Asp-474, Asp-476, Ser-478, Tyr-480, Glu-485, Asp-508, Asp-510, Asp-512, Arg-514, and Glu-519 together coordinate Ca(2+).

This sequence belongs to the protein kinase superfamily. Ser/Thr protein kinase family. CDPK subfamily. As to expression, expressed in vascular tissues of crowns and roots, vascular bundles and central cylinder. Expressed in roots, leaf blades, spikelets and developing seeds.

The protein localises to the membrane. It carries out the reaction L-seryl-[protein] + ATP = O-phospho-L-seryl-[protein] + ADP + H(+). The catalysed reaction is L-threonyl-[protein] + ATP = O-phospho-L-threonyl-[protein] + ADP + H(+). Activated by calcium. Autophosphorylation may play an important role in the regulation of the kinase activity. May play a role in signal transduction pathways that involve calcium as a second messenger. May function in signal transduction pathways that positively regulate responses to cold, salt and drought stresses. In Oryza sativa subsp. japonica (Rice), this protein is Calcium-dependent protein kinase 13.